The primary structure comprises 570 residues: Proline--tRNA ligase (570 aa).

It belongs to the class-II aminoacyl-tRNA synthetase family. ProS type 1 subfamily. As to quaternary structure, homodimer.

The protein localises to the cytoplasm. The enzyme catalyses tRNA(Pro) + L-proline + ATP = L-prolyl-tRNA(Pro) + AMP + diphosphate. Catalyzes the attachment of proline to tRNA(Pro) in a two-step reaction: proline is first activated by ATP to form Pro-AMP and then transferred to the acceptor end of tRNA(Pro). As ProRS can inadvertently accommodate and process non-cognate amino acids such as alanine and cysteine, to avoid such errors it has two additional distinct editing activities against alanine. One activity is designated as 'pretransfer' editing and involves the tRNA(Pro)-independent hydrolysis of activated Ala-AMP. The other activity is designated 'posttransfer' editing and involves deacylation of mischarged Ala-tRNA(Pro). The misacylated Cys-tRNA(Pro) is not edited by ProRS. The chain is Proline--tRNA ligase from Clostridium beijerinckii (strain ATCC 51743 / NCIMB 8052) (Clostridium acetobutylicum).